The sequence spans 237 residues: Uridylate kinase (237 aa).

ATP is bound at residue 11–14 (KLSG). An involved in allosteric activation by GTP region spans residues 18–23 (GGGGIG). G52 serves as a coordination point for UMP. Residues G53 and R57 each coordinate ATP. UMP-binding positions include D72 and 133 to 140 (SGMPYFST). 3 residues coordinate ATP: Q161, Y167, and D170.

Belongs to the UMP kinase family. In terms of assembly, homohexamer.

It is found in the cytoplasm. It catalyses the reaction UMP + ATP = UDP + ADP. It participates in pyrimidine metabolism; CTP biosynthesis via de novo pathway; UDP from UMP (UMPK route): step 1/1. Allosterically activated by GTP. Inhibited by UTP. Its function is as follows. Catalyzes the reversible phosphorylation of UMP to UDP. The protein is Uridylate kinase of Cutibacterium acnes (strain DSM 16379 / KPA171202) (Propionibacterium acnes).